Consider the following 519-residue polypeptide: Cyclic AMP-responsive element-binding protein 3-like protein 1 (519 aa).

The interval 1–60 is required for transcriptional activation; sequence MDAVLEPFPADRLFPGSSFLDLGDLNESDFLNNAHFPEHLDHFTENMEDFSNDLFSSFFD. At 1–374 the chain is on the cytoplasmic side; the sequence is MDAVLEPFPA…YKMAATQTGT (374 aa). The disordered stretch occupies residues 71-98; the sequence is LDMELDSPTPGIQAEHSYSLSGDSAPQS. A compositionally biased stretch (polar residues) spans 86–97; sequence HSYSLSGDSAPQ. K184 participates in a covalent cross-link: Glycyl lysine isopeptide (Lys-Gly) (interchain with G-Cter in SUMO2). Positions 200-259 are disordered; the sequence is DLVQMPPTPPSSHGSDSDGSQSPRSLPPSSPVRPMARSSTAISTSPLLTAPHKLQGTSGP. Over residues 210–223 the composition is skewed to low complexity; the sequence is SSHGSDSDGSQSPR. Over residues 236 to 246 the composition is skewed to polar residues; sequence RSSTAISTSPL. The region spanning 290-353 is the bZIP domain; that stretch reads ALKRVRRKIK…RTLLQQLQKL (64 aa). Residues 292-321 are basic motif; sequence KRVRRKIKNKISAQESRRKKKEYVECLEKK. The interval 332 to 353 is leucine-zipper; it reads LWKKVETLENANRTLLQQLQKL. The chain crosses the membrane as a helical; Signal-anchor for type II membrane protein span at residues 375-395; it reads CLMVAALCFVLVLGSLVPCLP. Positions 392-395 match the MBTPS2 recognition motif; it reads PCLP. Residues 396-519 are Lumenal-facing; that stretch reads EFSSGSQTVK…LGPNTTIKLS (124 aa). Residues 423-426 carry the MBTPS1 recognition motif; that stretch reads RSLL. The tract at residues 484 to 519 is disordered; it reads EAWPKDGGNGTSPDFSHSKEWFHDRDLGPNTTIKLS. A glycan (N-linked (GlcNAc...) asparagine) is linked at N492. The segment covering 499-510 has biased composition (basic and acidic residues); that stretch reads SHSKEWFHDRDL. N513 is a glycosylation site (N-linked (GlcNAc...) asparagine).

It belongs to the bZIP family. ATF subfamily. In terms of assembly, interacts with SMAD4, the interaction takes place upon TGFB1 induction and SMAD4 acts as a CREB3L1 coactivator to induce the expression of genes involved in assembly of collagen extracellular matrix. In terms of processing, upon ER stress or DNA damage, translocated to the Golgi apparatus, where it is processed by regulated intramembrane proteolysis (RIP) to release the cytosol-facing N-terminal transcription factor domain. The cleavage is performed sequentially by site-1 and site-2 proteases (S1P/MBTPS1 and S2P/MBTPS2). RIP is induced by TGFB1 and ceramide. Post-translationally, N-glycosylated. Ubiquitinated by HRD1/SYVN1; undergoes 'Lys-48'-linked ubiquitination, followed by rapid proteasomal degradation under normal conditions. Upon ER stress, SYVN1 E3 ubiquitin-protein ligase dissociates from its substrate, ubiquitination does not occur and CREB3L1 is stabilized. In terms of tissue distribution, expressed in several tissues, with highest levels in pancreas and prostate. Expressed at relatively lower levels in brain.

It localises to the endoplasmic reticulum membrane. The protein resides in the nucleus. In terms of biological role, precursor of the transcription factor form (Processed cyclic AMP-responsive element-binding protein 3-like protein 1), which is embedded in the endoplasmic reticulum membrane with N-terminal DNA-binding and transcription activation domains oriented toward the cytosolic face of the membrane. In response to ER stress or DNA damage, transported to the Golgi, where it is cleaved in a site-specific manner by resident proteases S1P/MBTPS1 and S2P/MBTPS2. The released N-terminal cytosolic domain is translocated to the nucleus where it activates transcription of specific target genes involved in the cell-cycle progression inhibition. Its function is as follows. Transcription factor involved in cell type specific DNA damage and unfolded protein response (UPR). Binds the DNA consensus sequence 5'-GTGXGCXGC-3'. Plays a critical role in bone formation through the transcription of COL1A1, and possibly COL1A2, and the secretion of bone matrix proteins. Directly binds to the UPR element (UPRE)-like sequence in an osteoblast-specific COL1A1 promoter region and induces its transcription. Does not regulate COL1A1 in other tissues, such as skin. Required to protect astrocytes from ER stress-induced cell death. In astrocytes, binds to the cAMP response element (CRE) of the BiP/HSPA5 promoter and participate in its transcriptional activation. In astrocytes and osteoblasts, upon DNA damage, inhibits cell-cycle progression after G2/M phase by binding to promoters and activating transcription of genes encoding cell-cycle inhibitors, such as p21/CDKN1A. Required for TGFB1 to activate genes involved in the assembly of collagen extracellular matrix. (Microbial infection) May play a role in limiting virus spread by inhibiting proliferation of virus-infected cells. Upon infection with diverse DNA and RNA viruses, inhibits cell-cycle progression by binding to promoters and activating transcription of genes encoding cell-cycle inhibitors, such as p21/CDKN1A. In Homo sapiens (Human), this protein is Cyclic AMP-responsive element-binding protein 3-like protein 1.